Reading from the N-terminus, the 221-residue chain is Stromal cell-derived factor 2-like protein 1 (221 aa).

Residues 1–28 form the signal peptide; sequence MWGASRGRVAGPTLLGLLLALSVRSGGA. MIR domains are found at residues 33 to 87, 95 to 150, and 151 to 205; these read AGLV…IRGG, GLPV…VRCS, and GQHW…AMEG. Position 215 is a phosphoserine (Ser-215). Residues 218-221 carry the Prevents secretion from ER motif; that stretch reads HDEL.

In terms of tissue distribution, ubiquitously expressed with high expression in the testis, ovary, uterus, and low expression in heart and skeletal muscle.

It is found in the endoplasmic reticulum lumen. The polypeptide is Stromal cell-derived factor 2-like protein 1 (Sdf2l1) (Mus musculus (Mouse)).